The sequence spans 242 residues: uncharacterized protein (242 aa).

This is an uncharacterized protein from Agrobacterium vitis (Rhizobium vitis).